Here is a 660-residue protein sequence, read N- to C-terminus: Anoctamin-10 (660 aa).

The Cytoplasmic segment spans residues M1 to T207. Residues I208 to I228 form a helical membrane-spanning segment. Over G229–Y240 the chain is Extracellular. A helical transmembrane segment spans residues D241–W261. Topologically, residues K262–L316 are cytoplasmic. Residues V317–F337 traverse the membrane as a helical segment. Over D338–S352 the chain is Extracellular. Residues E353–M373 form a helical membrane-spanning segment. The Cytoplasmic portion of the chain corresponds to N374–L400. The helical transmembrane segment at I401–F421 threads the bilayer. The Extracellular portion of the chain corresponds to V422–E500. The helical transmembrane segment at L501–F521 threads the bilayer. The Cytoplasmic segment spans residues A522–G553. A helical transmembrane segment spans residues V554–I574. Residues G575–D590 lie on the Extracellular side of the membrane. Residues L591–F611 form a helical membrane-spanning segment. Over A612–T660 the chain is Cytoplasmic.

The protein belongs to the anoctamin family. In terms of tissue distribution, highly expressed in the brain. Intermediate levels in the retina and heart and low levels in the placenta, liver, lung, duodenum, kidney, testis and spleen. In brain areas, highest expression in the frontal and occipital cortices and in the cerebellum. Lower expression in the fetal brain than in the adult brain.

Its subcellular location is the cell membrane. In terms of biological role, does not exhibit calcium-activated chloride channel (CaCC) activity. Can inhibit the activity of ANO1. The protein is Anoctamin-10 (ANO10) of Homo sapiens (Human).